We begin with the raw amino-acid sequence, 341 residues long: MVREEVPVSTRTLQWKCVESRADSKRLYYGRFVLSPLMKGQADTIGIAMRRALLGELEGTCITRAKSDKVPHEYSTVVGIEESVHEILMNLKKMVFRSDLYGTLDASICVRGPRHVTAQDIISPPSVEIVDTTQHIAVLTEPVDLCIELKIERGRGYCTRTQNNYQDGSYPIDAVSMPVRNANHSIHSYGNGNEKQEILFLEIWTNGSLTPKEALYEASRNLIDLFIPFLHAEEQDINRNMEDNLKRASVPFFAFDDGLDNIKREIILKRIFIDQLELPPRTYNCLKRSNIHTLLDLLSKSQEDLMRIEHFRVEDVKQIFDILQKGFTIDLLKNSNQFESR.

The alpha N-terminal domain (alpha-NTD) stretch occupies residues 1-233; it reads MVREEVPVST…DLFIPFLHAE (233 aa). Positions 266-341 are alpha C-terminal domain (alpha-CTD); the sequence is IILKRIFIDQ…LKNSNQFESR (76 aa).

It belongs to the RNA polymerase alpha chain family. As to quaternary structure, in plastids the minimal PEP RNA polymerase catalytic core is composed of four subunits: alpha, beta, beta', and beta''. When a (nuclear-encoded) sigma factor is associated with the core the holoenzyme is formed, which can initiate transcription.

The protein resides in the plastid. Its subcellular location is the chloroplast. It catalyses the reaction RNA(n) + a ribonucleoside 5'-triphosphate = RNA(n+1) + diphosphate. Functionally, DNA-dependent RNA polymerase catalyzes the transcription of DNA into RNA using the four ribonucleoside triphosphates as substrates. This is DNA-directed RNA polymerase subunit alpha from Nymphaea alba (White water-lily).